The chain runs to 156 residues: Snaclec rhinocetin subunit alpha (156 aa).

Positions 1 to 23 (MGRFIFLSSGWLVVFLSLSGTGA) are cleaved as a signal peptide. 3 disulfide bridges follow: Cys-27/Cys-38, Cys-55/Cys-150, and Cys-125/Cys-142. Residues 34–151 (YEGHCYKFFF…CGDNYPFVCM (118 aa)) enclose the C-type lectin domain.

It belongs to the snaclec family. In terms of assembly, heterodimer; disulfide-linked. Expressed by the venom gland.

It is found in the secreted. In terms of biological role, antagonist of the alpha-2 subunit of the integrin alpha-2/beta-1 (ITGA2/ITGB1) on human platelets and endothelial cells. This protein inhibits collagen-stimulated activation of human platelets in a dose-dependent manner. In addition, it antagonizes the binding of monoclonal antibodies against the alpha-2 subunit of integrin alpha-2/beta-1 to platelets and it coimmunoprecipitates with this integrin. The chain is Snaclec rhinocetin subunit alpha from Bitis rhinoceros (West African gaboon viper).